Consider the following 579-residue polypeptide: Isocitrate dehydrogenase kinase/phosphatase (579 aa).

ATP is bound by residues 324–330 and K345; that span reads ADGTPGM. D380 is an active-site residue.

The protein belongs to the AceK family.

It localises to the cytoplasm. It catalyses the reaction L-seryl-[isocitrate dehydrogenase] + ATP = O-phospho-L-seryl-[isocitrate dehydrogenase] + ADP + H(+). Its function is as follows. Bifunctional enzyme which can phosphorylate or dephosphorylate isocitrate dehydrogenase (IDH) on a specific serine residue. This is a regulatory mechanism which enables bacteria to bypass the Krebs cycle via the glyoxylate shunt in response to the source of carbon. When bacteria are grown on glucose, IDH is fully active and unphosphorylated, but when grown on acetate or ethanol, the activity of IDH declines drastically concomitant with its phosphorylation. This is Isocitrate dehydrogenase kinase/phosphatase from Xanthomonas campestris pv. campestris (strain 8004).